The sequence spans 138 residues: Acidic phospholipase A2 MVL-PLA2 (138 aa).

The first 16 residues, 1-16, serve as a signal peptide directing secretion; it reads MRTLWIVAVCLMGVEG. Cystine bridges form between Cys-42–Cys-131, Cys-44–Cys-60, Cys-59–Cys-111, Cys-65–Cys-138, Cys-66–Cys-104, Cys-73–Cys-97, and Cys-91–Cys-102. Positions 43, 45, and 47 each coordinate Ca(2+). His-63 is an active-site residue. Residue Asp-64 coordinates Ca(2+). The May inhibit integrin function (Atypical cell attachment site) signature appears at 86-88; the sequence is NGD. Asp-105 is a catalytic residue.

Belongs to the phospholipase A2 family. Group II subfamily. D49 sub-subfamily. The cofactor is Ca(2+). In terms of tissue distribution, expressed by the venom gland.

It is found in the secreted. It carries out the reaction a 1,2-diacyl-sn-glycero-3-phosphocholine + H2O = a 1-acyl-sn-glycero-3-phosphocholine + a fatty acid + H(+). Its function is as follows. Snake venom phospholipase A2 (PLA2) that displays an inhibitory effect, independent from its catalytic activity, on tumor cell adhesion and migration. This effect is mediated via specific inhibition of integrins alpha-5/beta-1 (ITGA5/ITGB1), alpha-v/beta-3 (ITGAV/ITGB3) and alpha-v/beta-6 (ITGAV/ITGB6). PLA2 catalyzes the calcium-dependent hydrolysis of the 2-acyl groups in 3-sn-phosphoglycerides. In Macrovipera lebetina transmediterranea (Blunt-nosed viper), this protein is Acidic phospholipase A2 MVL-PLA2.